The sequence spans 605 residues: MAQAKKSVDIKNIRNFSIIAHIDHGKSTLADRFIQMCGGLQDREMQAQVLDSMELERERGITIKAASVTLYYTHPNGQEYQLNFIDTPGHVDFSYEVSRSLAACEGALLVVDAAQGVEAQSVANCYTAIEQGLEVLPILNKIDLPQAEPERVIHEIEEIIGIEATNAPTCSAKTGLGVEGVLETLVDVIPAPTGDREAPLQALIIDSWFDNYLGVVSLVRIKDGRIRKGDKMLVKSTGQTHIVTSVGVFNPKHTETGVLEAGEVGFVIAGIKDIFGAPVGDTITLSTTPEVASLPGFKKVKPQVYAGLFPIDASDFEPFREALQKLQINDSALFFEPESSDALGFGFRCGFLGMLHMEIVQERLEREYDLDLISSAPTVVYEAVTKKGDTIYIDSPSKMPDGSVVEDLREPIAECHILVPQEYLGNVMTLCIERRGVQKDMKFLGNQVSITFEIPMAEVVMDFFDKLKSCSRGFASLDYNFIRFESSSLVKVDVLINGEKVDALAMICHRNDARHRGIALVEKMKDLIPRQMFDVAIQAAIGAQIIARSTVKAMRKNVLAKCYGGDVSRKKKLLAKQKEGKKRMKQVGSVEIPQEAFLAVLKVER.

The 183-residue stretch at 11 to 193 (KNIRNFSIIA…TLVDVIPAPT (183 aa)) folds into the tr-type G domain. Residues 23 to 28 (DHGKST) and 140 to 143 (NKID) contribute to the GTP site.

It belongs to the TRAFAC class translation factor GTPase superfamily. Classic translation factor GTPase family. LepA subfamily.

It localises to the cell inner membrane. The enzyme catalyses GTP + H2O = GDP + phosphate + H(+). In terms of biological role, required for accurate and efficient protein synthesis under certain stress conditions. May act as a fidelity factor of the translation reaction, by catalyzing a one-codon backward translocation of tRNAs on improperly translocated ribosomes. Back-translocation proceeds from a post-translocation (POST) complex to a pre-translocation (PRE) complex, thus giving elongation factor G a second chance to translocate the tRNAs correctly. Binds to ribosomes in a GTP-dependent manner. This chain is Elongation factor 4, found in Acinetobacter baumannii (strain AB307-0294).